The sequence spans 196 residues: Carnitine operon protein CaiE (196 aa).

The interval 173-196 is disordered; the sequence is TQPLRQMEENRPRLQGTTDVTPKR. The segment covering 187–196 has biased composition (polar residues); that stretch reads QGTTDVTPKR.

Belongs to the transferase hexapeptide repeat family.

It functions in the pathway amine and polyamine metabolism; carnitine metabolism. Functionally, overproduction of CaiE stimulates the activity of CaiB and CaiD. The polypeptide is Carnitine operon protein CaiE (Shigella flexneri serotype 5b (strain 8401)).